The chain runs to 102 residues: Small ribosomal subunit protein uS10 (102 aa).

This sequence belongs to the universal ribosomal protein uS10 family. As to quaternary structure, part of the 30S ribosomal subunit.

Its function is as follows. Involved in the binding of tRNA to the ribosomes. This is Small ribosomal subunit protein uS10 from Streptococcus sanguinis (strain SK36).